Consider the following 222-residue polypeptide: Interleukin-12 subunit alpha (222 aa).

The signal sequence occupies residues 1-25 (MCPPRGLLLVAILVLLNHLDHLSLA). 3 disulfides stabilise this stretch: Cys-40-Cys-113, Cys-67-Cys-199, and Cys-88-Cys-126. Residues Asn-42, Asn-96, and Asn-110 are each glycosylated (N-linked (GlcNAc...) asparagine).

This sequence belongs to the IL-6 superfamily. As to quaternary structure, heterodimer with IL12B; disulfide-linked. This heterodimer is known as interleukin IL-12. Heterodimer with EBI3/IL27B; not disulfide-linked. This heterodimer is known as interleukin IL-35. Interacts with NBR1; this interaction promotes IL-12 secretion.

Its subcellular location is the secreted. Heterodimerizes with IL12B to form the IL-12 cytokine or with EBI3/IL27B to form the IL-35 cytokine. IL-12 is primarily produced by professional antigen-presenting cells (APCs) such as B-cells and dendritic cells (DCs) as well as macrophages and granulocytes and regulates T-cell and natural killer-cell responses, induces the production of interferon-gamma (IFN-gamma), favors the differentiation of T-helper 1 (Th1) cells and is an important link between innate resistance and adaptive immunity. Mechanistically, exerts its biological effects through a receptor composed of IL12R1 and IL12R2 subunits. Binding to the receptor results in the rapid tyrosine phosphorylation of a number of cellular substrates including the JAK family kinases TYK2 and JAK2. In turn, recruited STAT4 gets phosphorylated and translocates to the nucleus where it regulates cytokine/growth factor responsive genes. As part of IL-35, plays essential roles in maintaining the immune homeostasis of the liver microenvironment and also functions as an immune-suppressive cytokine. Mediates biological events through unconventional receptors composed of IL12RB2 and gp130/IL6ST heterodimers or homodimers. Signaling requires the transcription factors STAT1 and STAT4, which form a unique heterodimer that binds to distinct DNA sites. This is Interleukin-12 subunit alpha (IL12A) from Equus caballus (Horse).